A 247-amino-acid chain; its full sequence is tRNA pseudouridine synthase A (247 aa).

Residue aspartate 53 is the Nucleophile of the active site. Tyrosine 112 is a substrate binding site.

It belongs to the tRNA pseudouridine synthase TruA family. In terms of assembly, homodimer.

It catalyses the reaction uridine(38/39/40) in tRNA = pseudouridine(38/39/40) in tRNA. Formation of pseudouridine at positions 38, 39 and 40 in the anticodon stem and loop of transfer RNAs. In Anaplasma marginale (strain St. Maries), this protein is tRNA pseudouridine synthase A.